Reading from the N-terminus, the 133-residue chain is DNA-directed RNA polymerase subunit omega (133 aa).

It belongs to the RNA polymerase subunit omega family. As to quaternary structure, the RNAP catalytic core consists of 2 alpha, 1 beta, 1 beta' and 1 omega subunit. When a sigma factor is associated with the core the holoenzyme is formed, which can initiate transcription.

It catalyses the reaction RNA(n) + a ribonucleoside 5'-triphosphate = RNA(n+1) + diphosphate. Functionally, promotes RNA polymerase assembly. Latches the N- and C-terminal regions of the beta' subunit thereby facilitating its interaction with the beta and alpha subunits. This is DNA-directed RNA polymerase subunit omega from Mesorhizobium japonicum (strain LMG 29417 / CECT 9101 / MAFF 303099) (Mesorhizobium loti (strain MAFF 303099)).